The primary structure comprises 198 residues: Probable chemoreceptor glutamine deamidase CheD (198 aa).

The protein belongs to the CheD family.

It catalyses the reaction L-glutaminyl-[protein] + H2O = L-glutamyl-[protein] + NH4(+). Its function is as follows. Probably deamidates glutamine residues to glutamate on methyl-accepting chemotaxis receptors (MCPs), playing an important role in chemotaxis. The protein is Probable chemoreceptor glutamine deamidase CheD of Stenotrophomonas maltophilia (strain K279a).